The sequence spans 270 residues: Undecaprenyl-diphosphatase (270 aa).

Transmembrane regions (helical) follow at residues 1 to 21 (MTWWEALLLGLIQGLTEFIPV), 92 to 112 (FRLGVFILVTLVPTGVAYVLF), 119 to 139 (AFGSPRFTSAMLVGTGVLLLL), 150 to 170 (LSGVKAFVVGVAQSCALVPGI), 193 to 213 (FSFLMLLPVVLGGTVLKGLEL), 223 to 243 (LSLGIGTVAAYGSGIGAIYVV), and 250 to 270 (GNLQYFAYYCFLIGGLGLWLL).

The protein belongs to the UppP family.

It localises to the cell inner membrane. It carries out the reaction di-trans,octa-cis-undecaprenyl diphosphate + H2O = di-trans,octa-cis-undecaprenyl phosphate + phosphate + H(+). Its function is as follows. Catalyzes the dephosphorylation of undecaprenyl diphosphate (UPP). Confers resistance to bacitracin. The polypeptide is Undecaprenyl-diphosphatase (Salinibacter ruber (strain DSM 13855 / M31)).